The following is a 521-amino-acid chain: GMP synthase [glutamine-hydrolyzing] (521 aa).

Residues 9-203 form the Glutamine amidotransferase type-1 domain; the sequence is KILILDFGSQ…VSDICQCKKN (195 aa). Cys86 serves as the catalytic Nucleophile. Active-site residues include His177 and Glu179. Residues 204 to 396 form the GMPS ATP-PPase domain; that stretch reads WTTDNIITKL…LGLPTHMLNC (193 aa). 231–237 is a binding site for ATP; that stretch reads SGGVDSS.

In terms of assembly, homodimer.

The enzyme catalyses XMP + L-glutamine + ATP + H2O = GMP + L-glutamate + AMP + diphosphate + 2 H(+). The protein operates within purine metabolism; GMP biosynthesis; GMP from XMP (L-Gln route): step 1/1. Catalyzes the synthesis of GMP from XMP. In Vesicomyosocius okutanii subsp. Calyptogena okutanii (strain HA), this protein is GMP synthase [glutamine-hydrolyzing].